Consider the following 230-residue polypeptide: Large ribosomal subunit protein uL4 (230 aa).

A disordered region spans residues arginine 59–glutamine 113.

Belongs to the universal ribosomal protein uL4 family. Part of the 50S ribosomal subunit.

Its function is as follows. One of the primary rRNA binding proteins, this protein initially binds near the 5'-end of the 23S rRNA. It is important during the early stages of 50S assembly. It makes multiple contacts with different domains of the 23S rRNA in the assembled 50S subunit and ribosome. Functionally, forms part of the polypeptide exit tunnel. The protein is Large ribosomal subunit protein uL4 of Nocardia farcinica (strain IFM 10152).